Consider the following 164-residue polypeptide: General odorant-binding protein 1 (164 aa).

Positions 1–19 are cleaved as a signal peptide; it reads MPGVLRALLLLAAAAPLLA. Disulfide bonds link Cys38–Cys73, Cys69–Cys127, and Cys116–Cys136.

This sequence belongs to the PBP/GOBP family. Antenna.

Functionally, present in the aqueous fluid surrounding olfactory sensory dendrites and are thought to aid in the capture and transport of hydrophobic odorants into and through this fluid. The polypeptide is General odorant-binding protein 1 (Heliothis virescens (Tobacco budworm moth)).